Consider the following 424-residue polypeptide: Cyclin-dependent kinase D-1 (424 aa).

Residues 19–299 (YLKREVLGEG…AQQALEHRYF (281 aa)) form the Protein kinase domain. Residues 25 to 33 (LGEGTYGVV) and Lys48 each bind ATP. Thr29 carries the post-translational modification Phosphothreonine. Residue Tyr30 is modified to Phosphotyrosine. The active-site Proton acceptor is the Asp141. Ser168 carries the post-translational modification Phosphoserine. Thr174 is modified (phosphothreonine). Disordered stretches follow at residues 303 to 337 (PAPT…PVVL) and 359 to 424 (ADRT…GYTE). The span at 359–374 (ADRTEEHPSGARHMDD) shows a compositional bias: basic and acidic residues.

Belongs to the protein kinase superfamily. CMGC Ser/Thr protein kinase family. CDC2/CDKX subfamily.

The protein resides in the nucleus. It catalyses the reaction L-seryl-[protein] + ATP = O-phospho-L-seryl-[protein] + ADP + H(+). It carries out the reaction L-threonyl-[protein] + ATP = O-phospho-L-threonyl-[protein] + ADP + H(+). The enzyme catalyses [DNA-directed RNA polymerase] + ATP = phospho-[DNA-directed RNA polymerase] + ADP + H(+). The sequence is that of Cyclin-dependent kinase D-1 (CDKD-1) from Oryza sativa subsp. indica (Rice).